We begin with the raw amino-acid sequence, 195 residues long: Glycerol-3-phosphate acyltransferase 1 (195 aa).

A run of 5 helical transmembrane segments spans residues 6–26 (VILT…GHFL), 52–72 (LGIA…FLVV), 74–94 (LGLK…AVAG), 117–137 (LAVY…LTFL), and 168–188 (FGLG…ISLF).

The protein belongs to the PlsY family. Probably interacts with PlsX.

It localises to the cell membrane. The enzyme catalyses an acyl phosphate + sn-glycerol 3-phosphate = a 1-acyl-sn-glycero-3-phosphate + phosphate. It functions in the pathway lipid metabolism; phospholipid metabolism. Functionally, catalyzes the transfer of an acyl group from acyl-phosphate (acyl-PO(4)) to glycerol-3-phosphate (G3P) to form lysophosphatidic acid (LPA). This enzyme utilizes acyl-phosphate as fatty acyl donor, but not acyl-CoA or acyl-ACP. This chain is Glycerol-3-phosphate acyltransferase 1, found in Moorella thermoacetica (strain ATCC 39073 / JCM 9320).